The chain runs to 209 residues: MKRTYPEPTPIYHITHIDNLKGILRMGKLLAHNQSPPKQRSIAYAHIQERRNRAKVPQPPGGVLHDYVPFYFCPRSPMLYAIYSGATEYQGGQEPILHLVSSAQAVHKAGLPFVFTDRHGVLSHARFFRQLEELAQLDWEAIQASYWADPPELREKKQAEFLVYKAFPWALIEEIAVYSQRVGEEVLKILKQFPEARRPRVCIRKDWYY.

The DarT domain occupies 9–209; the sequence is TPIYHITHID…RVCIRKDWYY (201 aa). NAD(+)-binding positions include 13 to 15, G22, and L30; that span reads HIT. An NAD(+)-binding element region spans residues 35-53; that stretch reads SPPKQRSIAYAHIQERRNR. Residues 44-50 mediate DNA binding; that stretch reads YAHIQER. NAD(+) is bound at residue R51. Catalysis depends on R51, which acts as the Proton acceptor. 3 DNA-binding regions span residues 75–80, 145–148, and 154–158; these read RSPMLY, SYWA, and REKKQ. The tract at residues 116 to 160 is ADP-ribosylating turn-turn loop; the sequence is TDRHGVLSHARFFRQLEELAQLDWEAIQASYWADPPELREKKQAE. Residue E160 is part of the active site.

The protein belongs to the DarT ADP-ribosyltransferase family. Interacts with cognate antitoxin DarG (via C-terminus); this heterodimeric complex neutralizes the toxic effect of DarT by preventing ssDNA binding to DarT and consequently inactivating the toxin by direct protein-protein interactions.

The catalysed reaction is a thymidine in DNA + NAD(+) = an N-(ADP-alpha-D-ribosyl)-thymidine in DNA + nicotinamide + H(+). Toxic component of the hybrid type II/IV toxin-antitoxin (TA) system DarTG, which plays a crucial role in controlling bacterial growth and bacteriophage infection. In case of phage infection, DarT toxin ADP-ribosylates DNA, which inhibits both viral DNA and RNA synthesis and leads to abortive infection. ADP-ribosylates ssDNA on the second thymidine of the consensus sequence 5'-TNTC-3'; the protein does not auto-modify. Arg-51 is highly flexible, allowing it to assume multiple positions in the crystal structures. Its toxic effect is neutralized by cognate antitoxin DarG. The sequence is that of DNA ADP-ribosyl transferase from Thermus sp. (strain 2.9).